The sequence spans 130 residues: Small ribosomal subunit protein uS9 (130 aa).

It belongs to the universal ribosomal protein uS9 family.

The chain is Small ribosomal subunit protein uS9 from Albidiferax ferrireducens (strain ATCC BAA-621 / DSM 15236 / T118) (Rhodoferax ferrireducens).